The primary structure comprises 389 residues: NAD-dependent protein deacetylase sirtuin-2 (389 aa).

Residues 1–34 (MAEPDPSHPLETQAGKVQEAQDSDSDSEGGAAGG) are disordered. Ala2 carries the N-acetylalanine modification. Residues Ser23, Ser25, Ser27, and Ser53 each carry the phosphoserine modification. A Deacetylase sirtuin-type domain is found at 57-338 (RLLDELTLEG…LALAELLGWK (282 aa)). Residues 85 to 89 (AGIST) and 95 to 97 (DFR) each bind NAD(+). Ser100 bears the Phosphoserine mark. 167 to 170 (QNID) serves as a coordination point for NAD(+). The active-site Proton acceptor is the His187. Zn(2+) contacts are provided by Cys195 and Cys200. Ser207 bears the Phosphoserine mark. Residues Cys221 and Cys224 each contribute to the Zn(2+) site. NAD(+) contacts are provided by residues 262-263 (TS), 286-288 (NKE), and Cys324. Residues 350–389 (ASIDAQSGAEAPNPSTSASPRKSPPPAQDEARTTEREKPQ) are disordered. Residues Ser368 and Ser372 each carry the phosphoserine modification. A compositionally biased stretch (basic and acidic residues) spans 378–389 (DEARTTEREKPQ).

This sequence belongs to the sirtuin family. Class I subfamily. In terms of assembly, interacts with CDC20, FOXO3 and FZR1. Associates with microtubules in primary cortical mature neurons. Homotrimer. Interacts (via both phosphorylated, unphosphorylated, active or inactive forms) with HDAC6; the interaction is necessary for the complex to interact with alpha-tubulin, suggesting that these proteins belong to a large complex that deacetylates the cytoskeleton. Interacts with FOXO1; the interaction is disrupted upon serum-starvation or oxidative stress, leading to increased level of acetylated FOXO1 and induction of autophagy. Interacts with RELA; the interaction occurs in the cytoplasm and is increased in a TNF-alpha-dependent manner. Interacts with HOXA10; the interaction is direct. Interacts with YWHAB and YWHAG; the interactions occur in a AKT-dependent manner and increase SIRT2-dependent TP53 deacetylation. Interacts with MAPK1/ERK2 and MAPK3/ERK1; the interactions increase SIRT2 stability and deacetylation activity. Interacts (phosphorylated form) with KMT5A isoform 2; the interaction is direct, stimulates KMT5A-mediated methyltransferase activity on histone at 'Lys-20' (H4K20me1) and is increased in a H(2)O(2)-induced oxidative stress-dependent manner. Interacts with G6PD; the interaction is enhanced by H(2)O(2) treatment. Interacts with a G1/S-specific cyclin E-CDK2 complex. Interacts with AURKA, CDK5R1 (p35 form) and CDK5 and HIF1A. Interacts with the tRNA ligase SARS1; recruited to the VEGFA promoter via interaction with SARS1. Interacts with BEX4; negatively regulates alpha-tubulin deacetylation by SIRT2. The cofactor is Zn(2+). In terms of processing, phosphorylated at phosphoserine and phosphothreonine. Phosphorylated at Ser-368 by a mitotic kinase CDK1/cyclin B at the G2/M transition; phosphorylation regulates the delay in cell-cycle progression. Phosphorylated at Ser-368 by a mitotic kinase G1/S-specific cyclin E/Cdk2 complex; phosphorylation inactivates SIRT2-mediated alpha-tubulin deacetylation and thereby negatively regulates cell adhesion, cell migration and neurite outgrowth during neuronal differentiation. Phosphorylated by cyclin A/Cdk2 and p35-Cdk5 complexes and to a lesser extent by the cyclin D3/Cdk4 and cyclin B/Cdk1, in vitro. Dephosphorylated at Ser-368 by CDC14A and CDC14B around early anaphase. Acetylated by EP300; acetylation leads both to the decreased of SIRT2-mediated alpha-tubulin deacetylase activity and SIRT2-mediated down-regulation of TP53 transcriptional activity. Post-translationally, ubiquitinated.

The protein localises to the nucleus. The protein resides in the cytoplasm. Its subcellular location is the perinuclear region. It is found in the cytoskeleton. It localises to the microtubule organizing center. The protein localises to the centrosome. The protein resides in the centriole. Its subcellular location is the spindle. It is found in the midbody. It localises to the chromosome. The protein localises to the perikaryon. The protein resides in the cell projection. Its subcellular location is the growth cone. It is found in the myelin membrane. It catalyses the reaction N(6)-acetyl-L-lysyl-[protein] + NAD(+) + H2O = 2''-O-acetyl-ADP-D-ribose + nicotinamide + L-lysyl-[protein]. It carries out the reaction N(6)-tetradecanoyl-L-lysyl-[protein] + NAD(+) + H2O = 2''-O-tetradecanoyl-ADP-D-ribose + nicotinamide + L-lysyl-[protein]. The enzyme catalyses N(6)-hexadecanoyl-L-lysyl-[protein] + NAD(+) + H2O = 2''-O-hexadecanoyl-ADP-D-ribose + nicotinamide + L-lysyl-[protein]. Inhibited by Sirtinol, A3 and M15 small molecules. Inhibited by nicotinamide. Its function is as follows. NAD-dependent protein deacetylase, which deacetylates internal lysines on histone and alpha-tubulin as well as many other proteins such as key transcription factors. Participates in the modulation of multiple and diverse biological processes such as cell cycle control, genomic integrity, microtubule dynamics, cell differentiation, metabolic networks, and autophagy. Plays a major role in the control of cell cycle progression and genomic stability. Functions in the antephase checkpoint preventing precocious mitotic entry in response to microtubule stress agents, and hence allowing proper inheritance of chromosomes. Positively regulates the anaphase promoting complex/cyclosome (APC/C) ubiquitin ligase complex activity by deacetylating CDC20 and FZR1, then allowing progression through mitosis. Associates both with chromatin at transcriptional start sites (TSSs) and enhancers of active genes. Plays a role in cell cycle and chromatin compaction through epigenetic modulation of the regulation of histone H4 'Lys-20' methylation (H4K20me1) during early mitosis. Specifically deacetylates histone H4 at 'Lys-16' (H4K16ac) between the G2/M transition and metaphase enabling H4K20me1 deposition by KMT5A leading to ulterior levels of H4K20me2 and H4K20me3 deposition throughout cell cycle, and mitotic S-phase progression. Deacetylates KMT5A modulating KMT5A chromatin localization during the mitotic stress response. Also deacetylates histone H3 at 'Lys-57' (H3K56ac) during the mitotic G2/M transition. During oocyte meiosis progression, may deacetylate histone H4 at 'Lys-16' (H4K16ac) and alpha-tubulin, regulating spindle assembly and chromosome alignment by influencing microtubule dynamics and kinetochore function. Deacetylates histone H4 at 'Lys-16' (H4K16ac) at the VEGFA promoter and thereby contributes to regulate expression of VEGFA, a key regulator of angiogenesis. Deacetylates alpha-tubulin at 'Lys-40' and hence controls neuronal motility, oligodendroglial cell arbor projection processes and proliferation of non-neuronal cells. Phosphorylation at Ser-368 by a G1/S-specific cyclin E-CDK2 complex inactivates SIRT2-mediated alpha-tubulin deacetylation, negatively regulating cell adhesion, cell migration and neurite outgrowth during neuronal differentiation. Deacetylates PARD3 and participates in the regulation of Schwann cell peripheral myelination formation during early postnatal development and during postinjury remyelination. Involved in several cellular metabolic pathways. Plays a role in the regulation of blood glucose homeostasis by deacetylating and stabilizing phosphoenolpyruvate carboxykinase PCK1 activity in response to low nutrient availability. Acts as a key regulator in the pentose phosphate pathway (PPP) by deacetylating and activating the glucose-6-phosphate G6PD enzyme, and therefore, stimulates the production of cytosolic NADPH to counteract oxidative damage. Maintains energy homeostasis in response to nutrient deprivation as well as energy expenditure by inhibiting adipogenesis and promoting lipolysis. Attenuates adipocyte differentiation by deacetylating and promoting FOXO1 interaction to PPARG and subsequent repression of PPARG-dependent transcriptional activity. Plays a role in the regulation of lysosome-mediated degradation of protein aggregates by autophagy in neuronal cells. Deacetylates FOXO1 in response to oxidative stress or serum deprivation, thereby negatively regulating FOXO1-mediated autophagy. Deacetylates a broad range of transcription factors and co-regulators regulating target gene expression. Deacetylates transcriptional factor FOXO3 stimulating the ubiquitin ligase SCF(SKP2)-mediated FOXO3 ubiquitination and degradation. Deacetylates HIF1A and therefore promotes HIF1A degradation and inhibition of HIF1A transcriptional activity in tumor cells in response to hypoxia. Deacetylates RELA in the cytoplasm inhibiting NF-kappaB-dependent transcription activation upon TNF-alpha stimulation. Inhibits transcriptional activation by deacetylating p53/TP53 and EP300. Also deacetylates EIF5A. Functions as a negative regulator on oxidative stress-tolerance in response to anoxia-reoxygenation conditions. Plays a role as tumor suppressor. In addition to protein deacetylase activity, also has activity toward long-chain fatty acyl groups and mediates protein-lysine demyristoylation and depalmitoylation of target proteins, such as ARF6 and KRAS, thereby regulating their association with membranes. This Macaca fascicularis (Crab-eating macaque) protein is NAD-dependent protein deacetylase sirtuin-2 (SIRT2).